We begin with the raw amino-acid sequence, 449 residues long: uncharacterized protein (449 aa).

Positions 1–11 (MLDAPEQDPVD) are enriched in acidic residues. Residues 1 to 33 (MLDAPEQDPVDPGDPASPPHGEAEQPLPGPRWP) are disordered. A helical membrane pass occupies residues 45-65 (LLLTALGGLLIAGLVTAIPAV). The segment at 349–449 (QPPVPPPDIP…PGPAEPAPAG (101 aa)) is disordered. A compositionally biased stretch (pro residues) spans 365–387 (PPIPLQLPTPRPAPPAQQLPSTP). The span at 409-418 (HAPASAAPAE) shows a compositional bias: low complexity. Positions 437-449 (ATPPGPAEPAPAG) are enriched in pro residues.

The protein resides in the cell membrane. Its subcellular location is the secreted. Functionally, may play a role in septum formation. This is an uncharacterized protein from Mycobacterium tuberculosis (strain CDC 1551 / Oshkosh).